We begin with the raw amino-acid sequence, 156 residues long: Ribosomal RNA large subunit methyltransferase H (156 aa).

Residues Gly104 and 123 to 128 (LSAMTL) contribute to the S-adenosyl-L-methionine site.

This sequence belongs to the RNA methyltransferase RlmH family. As to quaternary structure, homodimer.

It localises to the cytoplasm. It carries out the reaction pseudouridine(1915) in 23S rRNA + S-adenosyl-L-methionine = N(3)-methylpseudouridine(1915) in 23S rRNA + S-adenosyl-L-homocysteine + H(+). Specifically methylates the pseudouridine at position 1915 (m3Psi1915) in 23S rRNA. This is Ribosomal RNA large subunit methyltransferase H from Chromobacterium violaceum (strain ATCC 12472 / DSM 30191 / JCM 1249 / CCUG 213 / NBRC 12614 / NCIMB 9131 / NCTC 9757 / MK).